Consider the following 571-residue polypeptide: Glycine--tRNA ligase (571 aa).

The substrate site is built by Arg99 and Glu165. Residues 197-199 (RNE), 207-212 (IRLREF), 324-325 (EC), and 443-446 (GIDR) each bind ATP. A substrate-binding site is contributed by 212-216 (FTQAE). 439–443 (EPSFG) provides a ligand contact to substrate.

This sequence belongs to the class-II aminoacyl-tRNA synthetase family.

The protein localises to the cytoplasm. It carries out the reaction tRNA(Gly) + glycine + ATP = glycyl-tRNA(Gly) + AMP + diphosphate. In terms of biological role, catalyzes the attachment of glycine to tRNA(Gly). The protein is Glycine--tRNA ligase of Pyrococcus abyssi (strain GE5 / Orsay).